Here is a 167-residue protein sequence, read N- to C-terminus: Putative ripening-related protein 6 (167 aa).

The signal sequence occupies residues 1–23; that stretch reads MANAKQLALFAMLVLLLASCAAA. The interval 28–57 is disordered; that stretch reads KPDPCDGGGGGVDSHLPPGMRRCSSPAVSE.

Belongs to the kiwellin family.

The protein localises to the secreted. In Oryza sativa subsp. japonica (Rice), this protein is Putative ripening-related protein 6.